We begin with the raw amino-acid sequence, 692 residues long: Elongation factor G (692 aa).

The 276-residue stretch at 8–283 (QDLRNIGIVA…AVVDYLPSPL (276 aa)) folds into the tr-type G domain. GTP contacts are provided by residues 17–24 (AHIDAGKT), 81–85 (DTPGH), and 135–138 (NKLD).

The protein belongs to the TRAFAC class translation factor GTPase superfamily. Classic translation factor GTPase family. EF-G/EF-2 subfamily.

The protein resides in the cytoplasm. In terms of biological role, catalyzes the GTP-dependent ribosomal translocation step during translation elongation. During this step, the ribosome changes from the pre-translocational (PRE) to the post-translocational (POST) state as the newly formed A-site-bound peptidyl-tRNA and P-site-bound deacylated tRNA move to the P and E sites, respectively. Catalyzes the coordinated movement of the two tRNA molecules, the mRNA and conformational changes in the ribosome. This Hydrogenobaculum sp. (strain Y04AAS1) protein is Elongation factor G.